The sequence spans 125 residues: Large ribosomal subunit protein bL12 (125 aa).

Belongs to the bacterial ribosomal protein bL12 family. In terms of assembly, homodimer. Part of the ribosomal stalk of the 50S ribosomal subunit. Forms a multimeric L10(L12)X complex, where L10 forms an elongated spine to which 2 to 4 L12 dimers bind in a sequential fashion. Binds GTP-bound translation factors.

Forms part of the ribosomal stalk which helps the ribosome interact with GTP-bound translation factors. Is thus essential for accurate translation. The sequence is that of Large ribosomal subunit protein bL12 from Helicobacter pylori (strain P12).